The chain runs to 496 residues: Glycerol kinase (496 aa).

T11 provides a ligand contact to ADP. T11, S12, and S13 together coordinate ATP. T11 is a sn-glycerol 3-phosphate binding site. Position 15 (R15) interacts with ADP. Positions 81, 82, 133, and 242 each coordinate sn-glycerol 3-phosphate. The glycerol site is built by R81, E82, Y133, D242, and Q243. Residues T264 and G307 each coordinate ADP. Residues T264, G307, Q311, and G412 each contribute to the ATP site. The ADP site is built by G412 and N416.

This sequence belongs to the FGGY kinase family.

It catalyses the reaction glycerol + ATP = sn-glycerol 3-phosphate + ADP + H(+). It functions in the pathway polyol metabolism; glycerol degradation via glycerol kinase pathway; sn-glycerol 3-phosphate from glycerol: step 1/1. Inhibited by fructose 1,6-bisphosphate (FBP). Key enzyme in the regulation of glycerol uptake and metabolism. Catalyzes the phosphorylation of glycerol to yield sn-glycerol 3-phosphate. The chain is Glycerol kinase from Albidiferax ferrireducens (strain ATCC BAA-621 / DSM 15236 / T118) (Rhodoferax ferrireducens).